The following is a 2172-amino-acid chain: Non-reducing polyketide synthase dpfgA (2172 aa).

The tract at residues 74–181 (EWIKCGNSSL…LALCVGALVD (108 aa)) is N-terminal acylcarrier protein transacylase domain (SAT). Residues 389-783 (DDSIAIIGVS…GTNAAMLVCQ (395 aa)) enclose the Ketosynthase family 3 (KS3) domain. Catalysis depends on for beta-ketoacyl synthase activity residues Cys-529, His-665, and His-706. A malonyl-CoA:ACP transacylase (MAT) domain region spans residues 895 to 1197 (VFAGQTGRQA…SFHSILLQGQ (303 aa)). The For acyl/malonyl transferase activity role is filled by Ser-981. The segment at 1270 to 1403 (PELVSLAGPT…GTINWQGQGC (134 aa)) is N-terminal hotdog fold. A PKS/mFAS DH domain is found at 1270–1581 (PELVSLAGPT…LKRIPIRSLQ (312 aa)). The interval 1277 to 1575 (GPTDGETVEF…EIIGASLKRI (299 aa)) is product template (PT) domain. A C-terminal hotdog fold region spans residues 1428-1581 (SASTVQGLFV…LKRIPIRSLQ (154 aa)). 2 disordered regions span residues 1608–1631 (DSDS…HADF) and 1650–1672 (YPMD…VLSD). A compositionally biased stretch (low complexity) spans 1650-1668 (YPMDSSSFSSAQPPSSASS). The Carrier domain maps to 1671–1747 (SDHDQESTAL…DLYRMVLNHD (77 aa)). Ser-1707 bears the O-(pantetheine 4'-phosphoryl)serine mark. Residues 1751-1773 (DRGSTVLSDKAPKSKSDSSLHGQ) form a disordered region. The tract at residues 1975 to 2155 (EFLHRVLSRL…DAGFIHVDWT (181 aa)) is methyltransferase (CMeT) domain.

The protein operates within secondary metabolite biosynthesis; terpenoid biosynthesis. Functionally, non-reducing polyketide synthase; part of the gene cluster that mediates the biosynthesis of diterpenoid pyrones. The first step of the pathway is the synthesis of the alpha-pyrone moiety by the polyketide synthase dpfgA via condensation of one acetyl-CoA starter unit with 3 malonyl-CoA units and 2 methylations. The alpha-pyrone is then combined with geranylgeranyl pyrophosphate (GGPP) formed by the GGPP synthase dpfgD through the action of the prenyltransferase dpfgC to yield a linear alpha-pyrone diterpenoid. Subsequent steps in the diterpenoid pyrone biosynthetic pathway involve the decalin core formation, which is initiated by the epoxidation of the C10-C11 olefin by the FAD-dependent oxidoreductase dpfgE, and is followed by a cyclization cascade catalyzed by the terpene cyclase dpfgB. The short chain dehydrogenase/reductase dpfgG then oxidizes the 8S hydroxy group to a ketone and the short chain dehydrogenase/reductase dpfgH reduces the ketone to the 8R hydroxy group to yield higginsianin B. Higginsianin B is further methylated by the methyltransferase dpfgI to produce the intermediate named FDDP B. The cytochrome P450 monooxygenase dfgpJ then catalyzes a three-step oxidation at C-27 to generate a carboxylic acid as well as C-26 hydroxylation. Finally, methyltransferase dpfgK methylates the carboxylic acid generated by dpfgJ, yielding the final diterpenoid pyrones from the pathway which were named FDDP D and FDDP E. The polypeptide is Non-reducing polyketide synthase dpfgA (Gibberella zeae (strain ATCC MYA-4620 / CBS 123657 / FGSC 9075 / NRRL 31084 / PH-1) (Wheat head blight fungus)).